The primary structure comprises 93 residues: Putative pterin-4-alpha-carbinolamine dehydratase (93 aa).

The protein belongs to the pterin-4-alpha-carbinolamine dehydratase family.

It carries out the reaction (4aS,6R)-4a-hydroxy-L-erythro-5,6,7,8-tetrahydrobiopterin = (6R)-L-erythro-6,7-dihydrobiopterin + H2O. The chain is Putative pterin-4-alpha-carbinolamine dehydratase from Synechococcus sp. (strain WH7803).